A 179-amino-acid polypeptide reads, in one-letter code: Shikimate kinase (179 aa).

15-20 (GAGKTS) serves as a coordination point for ATP. T19 provides a ligand contact to Mg(2+). Residues D37, R61, and G83 each contribute to the substrate site. An ATP-binding site is contributed by R122. R142 provides a ligand contact to substrate.

Belongs to the shikimate kinase family. In terms of assembly, monomer. The cofactor is Mg(2+).

The protein localises to the cytoplasm. The enzyme catalyses shikimate + ATP = 3-phosphoshikimate + ADP + H(+). It participates in metabolic intermediate biosynthesis; chorismate biosynthesis; chorismate from D-erythrose 4-phosphate and phosphoenolpyruvate: step 5/7. Its function is as follows. Catalyzes the specific phosphorylation of the 3-hydroxyl group of shikimic acid using ATP as a cosubstrate. The polypeptide is Shikimate kinase (Coxiella burnetii (strain RSA 331 / Henzerling II)).